Reading from the N-terminus, the 510-residue chain is 2-isopropylmalate synthase (510 aa).

A Pyruvate carboxyltransferase domain is found at 5–267; the sequence is LVIFDTTLRD…DTRIDTTQIV (263 aa). Mn(2+)-binding residues include Asp-14, His-202, His-204, and Asn-238. Residues 392 to 510 are regulatory domain; that stretch reads RLLSLHAVSE…SSLERTHPQI (119 aa).

This sequence belongs to the alpha-IPM synthase/homocitrate synthase family. LeuA type 1 subfamily. In terms of assembly, homodimer. The cofactor is Mn(2+).

Its subcellular location is the cytoplasm. The catalysed reaction is 3-methyl-2-oxobutanoate + acetyl-CoA + H2O = (2S)-2-isopropylmalate + CoA + H(+). The protein operates within amino-acid biosynthesis; L-leucine biosynthesis; L-leucine from 3-methyl-2-oxobutanoate: step 1/4. In terms of biological role, catalyzes the condensation of the acetyl group of acetyl-CoA with 3-methyl-2-oxobutanoate (2-ketoisovalerate) to form 3-carboxy-3-hydroxy-4-methylpentanoate (2-isopropylmalate). The sequence is that of 2-isopropylmalate synthase from Nitrosomonas europaea (strain ATCC 19718 / CIP 103999 / KCTC 2705 / NBRC 14298).